A 674-amino-acid polypeptide reads, in one-letter code: Probable 3',5'-cyclic-AMP phosphodiesterase pde-4 (674 aa).

The segment at 1 to 82 (MPRRRGSSSS…TSSASSYHPP (82 aa)) is disordered. Gly residues predominate over residues 15 to 24 (GGSGGGGGFG). Over residues 39–62 (RTSSPSASSTSRTPPAALPPRTSA) the composition is skewed to low complexity. Polar residues predominate over residues 66 to 78 (PGSNHKLTSSASS). The PDEase domain maps to 328-660 (HVPEYGVNCA…EWYQSRIPEE (333 aa)). Histidine 407 serves as the catalytic Proton donor. A divalent metal cation contacts are provided by histidine 411, histidine 447, aspartate 448, and aspartate 565.

The protein belongs to the cyclic nucleotide phosphodiesterase family. A divalent metal cation serves as cofactor. In terms of tissue distribution, expressed in dorsal D (DD) motor neurons and several other neurons at the L1 stage. Expression in DD neurons decreases gradually beginning in the late L1 stage. Highly expressed in adult ventral D (VD) motor neurons, but diminished in adult DD motor neurons.

The enzyme catalyses 3',5'-cyclic AMP + H2O = AMP + H(+). In terms of biological role, hydrolyzes the second messenger 3',5'-cyclic AMP (cAMP), which is a key regulator of many important physiological processes. Antagonizes dorsal D (DD) motor neuron respecification by reducing levels of cAMP. The polypeptide is Probable 3',5'-cyclic-AMP phosphodiesterase pde-4 (pde-4) (Caenorhabditis elegans).